The chain runs to 509 residues: Maturase K (509 aa).

Belongs to the intron maturase 2 family. MatK subfamily.

The protein resides in the plastid. Functionally, usually encoded in the trnK tRNA gene intron. Probably assists in splicing its own and other chloroplast group II introns. This chain is Maturase K, found in Cuscuta reflexa (Southern Asian dodder).